A 148-amino-acid chain; its full sequence is Lysozyme C (148 aa).

Residues M1–G18 form the signal peptide. The 130-residue stretch at K19–V148 folds into the C-type lysozyme domain. Disulfide bonds link C24/C146, C48/C134, C83/C99, and C95/C113. Active-site residues include E53 and D71.

It belongs to the glycosyl hydrolase 22 family. In terms of assembly, monomer.

The catalysed reaction is Hydrolysis of (1-&gt;4)-beta-linkages between N-acetylmuramic acid and N-acetyl-D-glucosamine residues in a peptidoglycan and between N-acetyl-D-glucosamine residues in chitodextrins.. In terms of biological role, lysozymes have primarily a bacteriolytic function; those in tissues and body fluids are associated with the monocyte-macrophage system and enhance the activity of immunoagents. This Allenopithecus nigroviridis (Allen's swamp monkey) protein is Lysozyme C (LYZ).